Here is a 102-residue protein sequence, read N- to C-terminus: NADH-quinone oxidoreductase subunit K (102 aa).

The next 3 membrane-spanning stretches (helical) occupy residues 5–25 (LAHYLAVAAILFTIGVFGIFV), 30–50 (IIVILMSIELILLAVNINLVA), and 62–82 (IFAMFVLTVAAAEAAVGLAIL).

It belongs to the complex I subunit 4L family. In terms of assembly, NDH-1 is composed of 14 different subunits. Subunits NuoA, H, J, K, L, M, N constitute the membrane sector of the complex.

It is found in the cell inner membrane. The catalysed reaction is a quinone + NADH + 5 H(+)(in) = a quinol + NAD(+) + 4 H(+)(out). NDH-1 shuttles electrons from NADH, via FMN and iron-sulfur (Fe-S) centers, to quinones in the respiratory chain. The immediate electron acceptor for the enzyme in this species is believed to be ubiquinone. Couples the redox reaction to proton translocation (for every two electrons transferred, four hydrogen ions are translocated across the cytoplasmic membrane), and thus conserves the redox energy in a proton gradient. The protein is NADH-quinone oxidoreductase subunit K of Phenylobacterium zucineum (strain HLK1).